We begin with the raw amino-acid sequence, 176 residues long: Inorganic pyrophosphatase (176 aa).

Residues lysine 30, arginine 44, and tyrosine 56 each coordinate substrate. The Mg(2+) site is built by aspartate 66, aspartate 71, and aspartate 103. A substrate-binding site is contributed by tyrosine 142.

The protein belongs to the PPase family. Homohexamer. Mg(2+) serves as cofactor.

The protein localises to the cytoplasm. The catalysed reaction is diphosphate + H2O = 2 phosphate + H(+). Its function is as follows. Catalyzes the hydrolysis of inorganic pyrophosphate (PPi) forming two phosphate ions. This chain is Inorganic pyrophosphatase, found in Escherichia coli O6:H1 (strain CFT073 / ATCC 700928 / UPEC).